The following is an 808-amino-acid chain: Tegument protein UL47 homolog (808 aa).

2 disordered regions span residues 1–21 and 77–266; these read MQMPSMHRYGHPGQNQRRENQ and PNEE…SFGE. A compositionally biased stretch (basic and acidic residues) spans 83–92; that stretch reads DNSRGRDRTR. Residues 133–160 are compositionally biased toward basic residues; sequence SRARSRRRSSSRRRHRNASMHMHFRGGS. The span at 162 to 171 shows a compositional bias: polar residues; that stretch reads RSATGSQNLI. The segment covering 197–214 has biased composition (basic residues); it reads RSSRVRRRHRRSSRRRGP. Residues 235–259 show a composition bias toward basic and acidic residues; sequence PISDIDQKRLRKNSDTSSRGTRESP.

It belongs to the alphaherpesvirinae HHV-1 UL47 family. In terms of assembly, interacts with US3 kinase. Interacts with UL31 and UL34; these interactions seem important for efficient virion nuclear egress. Interacts with UL41/VHS. Post-translationally, phosphorylated by US3. This phosphorylation is required for proper nuclear localization. O-glycosylated.

It localises to the virion tegument. It is found in the host nucleus. Its subcellular location is the host cytoplasm. Tegument protein that can bind to various RNA transcripts. Plays a role in the attenuation of selective viral and cellular mRNA degradation by modulating the activity of host shutoff RNase UL41/VHS. Also plays a role in the primary envelopment of virions in the perinuclear space, probably by interacting with two nuclear egress proteins UL31 and UL34. Plays an important role in the splicing of glycoprotein/gC transcripts and thereby participates in bird-to-bird viral transmission. In Gallus gallus (Chicken), this protein is Tegument protein UL47 homolog (MDV060).